Here is a 476-residue protein sequence, read N- to C-terminus: Neuropeptide receptor 18 (476 aa).

The Extracellular segment spans residues 1–61; sequence MSSFYNEAKF…LSNHDNSSLM (61 aa). N-linked (GlcNAc...) asparagine glycans are attached at residues asparagine 43 and asparagine 57. A helical transmembrane segment spans residues 62 to 82; it reads LIAGFYALLFMFGTCGNAAIL. Topologically, residues 83-102 are cytoplasmic; the sequence is AVVHHVKGQDPRSRHNTTLT. A helical transmembrane segment spans residues 103–123; it reads YICILSIVDFLSMLPIPMTII. Residues 124-139 are Extracellular-facing; that stretch reads DQILGFWMFDTFACKL. Cysteines 137 and 228 form a disulfide. A helical membrane pass occupies residues 140 to 160; that stretch reads FRLLEHIGKIFSTFILVAFSI. Residues 161–179 are Cytoplasmic-facing; that stretch reads DRYCAVCHPLQVRVRNQRT. Residues 180 to 200 traverse the membrane as a helical segment; that stretch reads VFVFLGIMFFVTCVMLSPILL. The Extracellular portion of the chain corresponds to 201 to 236; it reads YAHSKELVMHEKVDLDQEVITRMHLYKCVDDLGREL. The helical transmembrane segment at 237–257 threads the bilayer; that stretch reads FVVFTLYSFVLAYLMPLLFMI. The Cytoplasmic segment spans residues 258–291; it reads YFYYEMLIRLFKQANVIKQTLVGRRSGGEEKKLT. A helical transmembrane segment spans residues 292-312; that stretch reads IPVGHIAIYTLAICSFHFICW. Topologically, residues 313–334 are extracellular; sequence TPYWISILYSLYEELYQDTKST. The helical transmembrane segment at 335 to 355 threads the bilayer; that stretch reads ASPPTYAFIYFMYGVHALPYI. The Cytoplasmic portion of the chain corresponds to 356-476; sequence NSASNFILYG…ITPDTESVIL (121 aa).

It belongs to the G-protein coupled receptor 1 family. Expressed in sensory neurons including ASER.

It is found in the cell membrane. In terms of biological role, probable receptor for neuropeptide ligand nlp-9 that plays a role in octopamine signaling and specifically, the octapamine inhibition of aversion responses in olfactory sensory neurons. In AWB olfactory sensory neurons, required for the detection of preferred food sources. The protein is Neuropeptide receptor 18 of Caenorhabditis elegans.